The chain runs to 149 residues: 3-hydroxyacyl-[acyl-carrier-protein] dehydratase FabZ (149 aa).

Residue H53 is part of the active site.

It belongs to the thioester dehydratase family. FabZ subfamily.

It is found in the cytoplasm. The enzyme catalyses a (3R)-hydroxyacyl-[ACP] = a (2E)-enoyl-[ACP] + H2O. In terms of biological role, involved in unsaturated fatty acids biosynthesis. Catalyzes the dehydration of short chain beta-hydroxyacyl-ACPs and long chain saturated and unsaturated beta-hydroxyacyl-ACPs. The sequence is that of 3-hydroxyacyl-[acyl-carrier-protein] dehydratase FabZ from Neisseria meningitidis serogroup C / serotype 2a (strain ATCC 700532 / DSM 15464 / FAM18).